Reading from the N-terminus, the 489-residue chain is Betaine aldehyde dehydrogenase (489 aa).

K(+) is bound by residues T26 and D93. Residue 150 to 152 coordinates NAD(+); that stretch reads GAW. K162 functions as the Charge relay system in the catalytic mechanism. 176–179 is an NAD(+) binding site; sequence KPSE. Position 180 (V180) interacts with K(+). 229–232 is an NAD(+) binding site; the sequence is GVET. L245 is a K(+) binding site. The active-site Proton acceptor is the E251. Positions 253, 285, and 386 each coordinate NAD(+). C285 acts as the Nucleophile in catalysis. At C285 the chain carries Cysteine sulfenic acid (-SOH). Residues K456 and G459 each coordinate K(+). The active-site Charge relay system is the E463.

Belongs to the aldehyde dehydrogenase family. In terms of assembly, dimer of dimers. K(+) is required as a cofactor.

The enzyme catalyses betaine aldehyde + NAD(+) + H2O = glycine betaine + NADH + 2 H(+). Its pathway is amine and polyamine biosynthesis; betaine biosynthesis via choline pathway; betaine from betaine aldehyde: step 1/1. Involved in the biosynthesis of the osmoprotectant glycine betaine. Catalyzes the irreversible oxidation of betaine aldehyde to the corresponding acid. The chain is Betaine aldehyde dehydrogenase from Burkholderia pseudomallei (strain K96243).